The sequence spans 151 residues: MAKRVQLALTESIASLGKEGDLVEVAPGYARNFLLPYGKAMNVTPAVLKQIERKKEKEKIAADKLKQEALDFQTALSTIGRFTIKKQVGEDGVLFGTVTNGDVAEAIEEATKKEIDRRNITVPDIHNLGSFTAKIKLHPEVNAEVNIEVTS.

The protein belongs to the bacterial ribosomal protein bL9 family.

Functionally, binds to the 23S rRNA. In Prochlorococcus marinus (strain MIT 9215), this protein is Large ribosomal subunit protein bL9.